The sequence spans 147 residues: Ubiquitin-conjugating enzyme E2 D3 (147 aa).

A UBC core domain is found at 1–147 (MALKRINKEL…SREWTQKYAM (147 aa)). C21 and C107 are oxidised to a cystine. C85 serves as the catalytic Glycyl thioester intermediate.

It belongs to the ubiquitin-conjugating enzyme family. In terms of assembly, interacts with SCF (SKP1-CUL1-F-box protein) E3 ubiquitin ligase complex; when Cullin is neddylated, the interaction between the E2 and the SCF complex is strengthened. Interacts with DAPK3. Interacts with BRCA1; the DNA damage checkpoint promotes the association with BRCA1 after ionizing radiation. Interacts non-covalently with ubiquitin. Interacts with E3 ubiquitin-protein ligase CBLC. Interacts with UBTD1. Interacts with RIGI and RNF135; involved in RIGI ubiquitination and activation. Phosphorylated by AURKB.

The protein resides in the cell membrane. The protein localises to the endosome membrane. The enzyme catalyses S-ubiquitinyl-[E1 ubiquitin-activating enzyme]-L-cysteine + [E2 ubiquitin-conjugating enzyme]-L-cysteine = [E1 ubiquitin-activating enzyme]-L-cysteine + S-ubiquitinyl-[E2 ubiquitin-conjugating enzyme]-L-cysteine.. It catalyses the reaction S-ubiquitinyl-[E1 ubiquitin-activating enzyme]-L-cysteine + [acceptor protein]-L-lysine = [E1 ubiquitin-activating enzyme]-L-cysteine + N(6)-monoubiquitinyl-[acceptor protein]-L-lysine.. It functions in the pathway protein modification; protein ubiquitination. Its function is as follows. Accepts ubiquitin from the E1 complex and catalyzes its covalent attachment to other proteins. In vitro catalyzes 'Lys-11'-, as well as 'Lys-48'-linked polyubiquitination. Cooperates with the E2 CDC34 and the SCF(FBXW11) E3 ligase complex for the polyubiquitination of NFKBIA leading to its subsequent proteasomal degradation. Acts as an initiator E2, priming the phosphorylated NFKBIA target at positions 'Lys-21' and/or 'Lys-22' with a monoubiquitin. Ubiquitin chain elongation is then performed by CDC34, building ubiquitin chains from the UBE2D3-primed NFKBIA-linked ubiquitin. Also acts as an initiator E2, in conjunction with RNF8, for the priming of PCNA. Monoubiquitination of PCNA, and its subsequent polyubiquitination, are essential events in the operation of the DNA damage tolerance (DDT) pathway that is activated after DNA damage caused by UV or chemical agents during S-phase. Associates with the BRCA1/BARD1 E3 ligase complex to perform ubiquitination at DNA damage sites following ionizing radiation leading to DNA repair. Targets DAPK3 for ubiquitination which influences promyelocytic leukemia protein nuclear body (PML-NB) formation in the nucleus. In conjunction with the MDM2 and TOPORS E3 ligases, functions ubiquitination of p53/TP53. In conjunction with the CBL E3 ligase, targets EGFR for polyubiquitination at the plasma membrane as well as during its internalization and transport on endosomes. In conjunction with the STUB1 E3 quality control E3 ligase, ubiquitinates unfolded proteins to catalyze their immediate destruction. Together with RNF135, catalyzes the viral RNA-dependent 'Lys-63'-linked polyubiquitination of RIGI to activate the downstream signaling pathway that leads to interferon beta production. Together with ZNF598, catalyzes ubiquitination of 40S ribosomal proteins in response to ribosome collisions. In cooperation with the GATOR2 complex, catalyzes 'Lys-6'-linked ubiquitination of NPRL2. This chain is Ubiquitin-conjugating enzyme E2 D3 (UBE2D3), found in Homo sapiens (Human).